Consider the following 237-residue polypeptide: Uracil-DNA glycosylase (237 aa).

Asp77 (proton acceptor) is an active-site residue.

The protein belongs to the uracil-DNA glycosylase (UDG) superfamily. UNG family.

Its subcellular location is the cytoplasm. It carries out the reaction Hydrolyzes single-stranded DNA or mismatched double-stranded DNA and polynucleotides, releasing free uracil.. Its function is as follows. Excises uracil residues from the DNA which can arise as a result of misincorporation of dUMP residues by DNA polymerase or due to deamination of cytosine. The protein is Uracil-DNA glycosylase of Acinetobacter baumannii (strain ACICU).